The sequence spans 143 residues: Hemoglobin subunit alpha (143 aa).

The Globin domain maps to 2–143; that stretch reads TLSDKDKSTV…VALALAERYR (142 aa). An O2-binding site is contributed by H60. Residue H89 participates in heme b binding.

It belongs to the globin family. As to quaternary structure, heterotetramer of two alpha chains and two beta chains. In terms of tissue distribution, red blood cells.

In terms of biological role, involved in oxygen transport from gills to the various peripheral tissues. The sequence is that of Hemoglobin subunit alpha (hba) from Thunnus thynnus (Atlantic bluefin tuna).